Here is a 343-residue protein sequence, read N- to C-terminus: Ubiquitin carboxyl-terminal hydrolase isozyme L5 (343 aa).

A UCH catalytic domain is found at 6-218 (GWCTIESDPG…IRFNLMAVIK (213 aa)). The active-site Nucleophile is cysteine 83. Histidine 157 acts as the Proton donor in catalysis. The tract at residues 242 to 266 (LSELNSGSGGDNKEESGGATPTTKE) is disordered. A ULD domain is found at 306 to 334 (NFTPLILNLIKGLAEKDNLQPLIQKAKDQ).

The protein belongs to the peptidase C12 family. As to quaternary structure, component of the 19S (PA700) regulatory complex of the 26S proteasome.

It localises to the cytoplasm. The protein resides in the nucleus. The catalysed reaction is Thiol-dependent hydrolysis of ester, thioester, amide, peptide and isopeptide bonds formed by the C-terminal Gly of ubiquitin (a 76-residue protein attached to proteins as an intracellular targeting signal).. Protease that specifically cleaves 'Lys-48'-linked polyubiquitin chains. Deubiquitinating enzyme associated with the 19S regulatory subunit of the 26S proteasome. In Dictyostelium discoideum (Social amoeba), this protein is Ubiquitin carboxyl-terminal hydrolase isozyme L5 (uch2).